We begin with the raw amino-acid sequence, 142 residues long: ATP synthase epsilon chain (142 aa).

This sequence belongs to the ATPase epsilon chain family. F-type ATPases have 2 components, CF(1) - the catalytic core - and CF(0) - the membrane proton channel. CF(1) has five subunits: alpha(3), beta(3), gamma(1), delta(1), epsilon(1). CF(0) has three main subunits: a, b and c.

It is found in the cell inner membrane. Produces ATP from ADP in the presence of a proton gradient across the membrane. The protein is ATP synthase epsilon chain of Actinobacillus succinogenes (strain ATCC 55618 / DSM 22257 / CCUG 43843 / 130Z).